Reading from the N-terminus, the 229-residue chain is ATP synthase subunit a (229 aa).

A run of 6 helical transmembrane segments spans residues A25 to A45, F82 to I102, N111 to I131, F142 to F162, L181 to M201, and G202 to Q222.

This sequence belongs to the ATPase A chain family. As to quaternary structure, F-type ATPases have 2 components, CF(1) - the catalytic core - and CF(0) - the membrane proton channel. CF(1) has five subunits: alpha(3), beta(3), gamma(1), delta(1), epsilon(1). CF(0) has three main subunits: a(1), b(2) and c(9-12). The alpha and beta chains form an alternating ring which encloses part of the gamma chain. CF(1) is attached to CF(0) by a central stalk formed by the gamma and epsilon chains, while a peripheral stalk is formed by the delta and b chains.

The protein resides in the cell inner membrane. In terms of biological role, key component of the proton channel; it plays a direct role in the translocation of protons across the membrane. The protein is ATP synthase subunit a of Geotalea daltonii (strain DSM 22248 / JCM 15807 / FRC-32) (Geobacter daltonii).